A 506-amino-acid polypeptide reads, in one-letter code: Galactose/methyl galactoside import ATP-binding protein MglA (506 aa).

2 ABC transporter domains span residues 14–249 (LEMS…VGRS) and 264–506 (VILE…SLHL). 46–53 (GENGAGKS) contributes to the ATP binding site.

The protein belongs to the ABC transporter superfamily. Galactose/methyl galactoside importer (TC 3.A.1.2.3) family. As to quaternary structure, the complex is composed of one ATP-binding protein (MglA), two transmembrane proteins (MglC) and a solute-binding protein (MglB).

Its subcellular location is the cell inner membrane. The enzyme catalyses D-galactose(out) + ATP + H2O = D-galactose(in) + ADP + phosphate + H(+). It catalyses the reaction methyl beta-D-galactoside(out) + ATP + H2O = methyl beta-D-galactoside(in) + ADP + phosphate + H(+). Part of the ABC transporter complex MglABC involved in galactose/methyl galactoside import. Responsible for energy coupling to the transport system. This is Galactose/methyl galactoside import ATP-binding protein MglA from Escherichia coli (strain K12).